A 168-amino-acid chain; its full sequence is Photosystem I assembly protein Ycf3 (168 aa).

3 TPR repeats span residues 35–68 (AFTY…EIDP), 72–105 (SYIL…NPFL), and 120–153 (GEQA…TPGN).

It belongs to the Ycf3 family.

Its subcellular location is the plastid. The protein localises to the chloroplast thylakoid membrane. Its function is as follows. Essential for the assembly of the photosystem I (PSI) complex. May act as a chaperone-like factor to guide the assembly of the PSI subunits. This Helianthus annuus (Common sunflower) protein is Photosystem I assembly protein Ycf3.